The primary structure comprises 363 residues: UDP-N-acetylglucosamine--N-acetylmuramyl-(pentapeptide) pyrophosphoryl-undecaprenol N-acetylglucosamine transferase (363 aa).

Residues 12–14, R166, S196, and Q291 each bind UDP-N-acetyl-alpha-D-glucosamine; that span reads TAG.

This sequence belongs to the glycosyltransferase 28 family. MurG subfamily.

The protein localises to the cell inner membrane. It catalyses the reaction di-trans,octa-cis-undecaprenyl diphospho-N-acetyl-alpha-D-muramoyl-L-alanyl-D-glutamyl-meso-2,6-diaminopimeloyl-D-alanyl-D-alanine + UDP-N-acetyl-alpha-D-glucosamine = di-trans,octa-cis-undecaprenyl diphospho-[N-acetyl-alpha-D-glucosaminyl-(1-&gt;4)]-N-acetyl-alpha-D-muramoyl-L-alanyl-D-glutamyl-meso-2,6-diaminopimeloyl-D-alanyl-D-alanine + UDP + H(+). Its pathway is cell wall biogenesis; peptidoglycan biosynthesis. In terms of biological role, cell wall formation. Catalyzes the transfer of a GlcNAc subunit on undecaprenyl-pyrophosphoryl-MurNAc-pentapeptide (lipid intermediate I) to form undecaprenyl-pyrophosphoryl-MurNAc-(pentapeptide)GlcNAc (lipid intermediate II). This chain is UDP-N-acetylglucosamine--N-acetylmuramyl-(pentapeptide) pyrophosphoryl-undecaprenol N-acetylglucosamine transferase, found in Legionella pneumophila (strain Lens).